The primary structure comprises 274 residues: Large ribosomal subunit protein uL2cz/uL2cy (274 aa).

Disordered regions lie at residues 1–24 and 223–274; these read MAIHLYKTSTPSTRNGTVDSQVKS and MNPV…RRSK. Positions 7-24 are enriched in polar residues; sequence KTSTPSTRNGTVDSQVKS.

Belongs to the universal ribosomal protein uL2 family. Part of the 50S ribosomal subunit.

The protein localises to the plastid. Its subcellular location is the chloroplast. This chain is Large ribosomal subunit protein uL2cz/uL2cy (rpl2-A), found in Nicotiana sylvestris (Wood tobacco).